The sequence spans 270 residues: Ribosomal RNA small subunit methyltransferase A (270 aa).

N18, L20, G45, E66, D91, and N112 together coordinate S-adenosyl-L-methionine.

The protein belongs to the class I-like SAM-binding methyltransferase superfamily. rRNA adenine N(6)-methyltransferase family. RsmA subfamily.

The protein resides in the cytoplasm. The enzyme catalyses adenosine(1518)/adenosine(1519) in 16S rRNA + 4 S-adenosyl-L-methionine = N(6)-dimethyladenosine(1518)/N(6)-dimethyladenosine(1519) in 16S rRNA + 4 S-adenosyl-L-homocysteine + 4 H(+). Functionally, specifically dimethylates two adjacent adenosines (A1518 and A1519) in the loop of a conserved hairpin near the 3'-end of 16S rRNA in the 30S particle. May play a critical role in biogenesis of 30S subunits. The sequence is that of Ribosomal RNA small subunit methyltransferase A from Shewanella piezotolerans (strain WP3 / JCM 13877).